A 469-amino-acid polypeptide reads, in one-letter code: MVLVAIGVVVAAAVVVSSLLLRWNEVRYSRKRGLPPGTMGWPLFGETTEFLKQGPSFMKARRLRYGSVFRTHILGCPTVVCMEAELNRRALASEGRGFVPGYPQSMLDILGRNNIAAVQGPLHRAMRGAMLSLVRPAMIRSSLLPKIDAFMRSHLAAWSSSSSSAVVDIQAKTKEMALLSALRQIAGVSAGPLSDALKAELYTLVLGTISLPINLPGTNYYQGFKARKKLVAMLEQMIAERRSSGQVHDDMLDALLTGVEGTREKLTDEQIIDLIITLIYSGYETMSTTSMMAVKYLSDHPKALEQLRKEHFDIRKGKAPEDAIDWNDFKSMTFTRAVIFETLRLATVVNGLLRKTTQDVEMNGYVIPKGWRIYVYTREINYDPFLYPDPMTFNPWRWLEKNMESHPHFMLFGGGSRMCPGKEVGTVEIATFLHYFVTQYRWEEEGNNTILKFPRVEAPNGLHIRVQDY.

The helical transmembrane segment at 1 to 21 (MVLVAIGVVVAAAVVVSSLLL) threads the bilayer. Cysteine 419 is a binding site for heme.

This sequence belongs to the cytochrome P450 family. The cofactor is heme. In terms of tissue distribution, expressed at low levels in all the tissues, but preferentially in the leaf sheath.

It is found in the membrane. The catalysed reaction is 6-deoxoteasterone + reduced [NADPH--hemoprotein reductase] + O2 = 6alpha-hydroxyteasterone + oxidized [NADPH--hemoprotein reductase] + H2O + H(+). It carries out the reaction 6alpha-hydroxytyphasterol + reduced [NADPH--hemoprotein reductase] + O2 = teasterone + oxidized [NADPH--hemoprotein reductase] + 2 H2O + H(+). It catalyses the reaction 3-dehydro-6-deoxoteasterone + reduced [NADPH--hemoprotein reductase] + O2 = 3-dehydro-6alpha-hydroxyteasterone + oxidized [NADPH--hemoprotein reductase] + H2O + H(+). The enzyme catalyses 3-dehydro-6alpha-hydroxyteasterone + reduced [NADPH--hemoprotein reductase] + O2 = 3-dehydroteasterone + oxidized [NADPH--hemoprotein reductase] + 2 H2O + H(+). The catalysed reaction is 6-deoxotyphasterol + reduced [NADPH--hemoprotein reductase] + O2 = 6alpha-hydroxytyphasterol + oxidized [NADPH--hemoprotein reductase] + H2O + H(+). It carries out the reaction 6alpha-hydroxytyphasterol + reduced [NADPH--hemoprotein reductase] + O2 = typhasterol + oxidized [NADPH--hemoprotein reductase] + 2 H2O + H(+). It catalyses the reaction 3-dehydro-6-deoxoteasterone + 2 reduced [NADPH--hemoprotein reductase] + 2 O2 = 3-dehydroteasterone + 2 oxidized [NADPH--hemoprotein reductase] + 3 H2O + 2 H(+). The enzyme catalyses 6-deoxoteasterone + 2 reduced [NADPH--hemoprotein reductase] + 2 O2 = teasterone + 2 oxidized [NADPH--hemoprotein reductase] + 3 H2O + 2 H(+). The catalysed reaction is 6-deoxotyphasterol + 2 reduced [NADPH--hemoprotein reductase] + 2 O2 = typhasterol + 2 oxidized [NADPH--hemoprotein reductase] + 3 H2O + 2 H(+). The protein operates within plant hormone biosynthesis; brassinosteroid biosynthesis. In terms of biological role, catalyzes the C6-oxidation step in brassinosteroids biosynthesis. May convert 6-deoxoteasterone (6-deoxoTE) to teasterone (TE), 3-dehydro-6-deoxoteasterone (6-deoxo3DT, 6-deoxo3DHT) to 3-dehydroteasterone (3DT, 3-DHT), and 6-deoxotyphasterol (6-deoxoTY) to typhasterol (TY). Involved in the organization and elongation of the leaf and stem cells. Not able to convert 6-deoxocastasterone (6-deoxoCS) and castasterone (CS) to brassinolide (BL). This chain is Cytochrome P450 85A1, found in Oryza sativa subsp. japonica (Rice).